The sequence spans 175 residues: RNA pyrophosphohydrolase (175 aa).

One can recognise a Nudix hydrolase domain in the interval 6 to 149 (GYRPNVGIVI…KRDVYRRVMK (144 aa)). Positions 38-59 (GGINPGETPEQAMYRELFEEVG) match the Nudix box motif.

The protein belongs to the Nudix hydrolase family. RppH subfamily. Requires a divalent metal cation as cofactor.

Functionally, accelerates the degradation of transcripts by removing pyrophosphate from the 5'-end of triphosphorylated RNA, leading to a more labile monophosphorylated state that can stimulate subsequent ribonuclease cleavage. This chain is RNA pyrophosphohydrolase, found in Yersinia pseudotuberculosis serotype O:1b (strain IP 31758).